We begin with the raw amino-acid sequence, 76 residues long: DNA-directed RNA polymerase subunit epsilon (76 aa).

The protein belongs to the RNA polymerase subunit epsilon family. RNAP is composed of a core of 2 alpha, a beta and a beta' subunit. The core is associated with a delta subunit, and at least one of epsilon or omega. When a sigma factor is associated with the core the holoenzyme is formed, which can initiate transcription.

It catalyses the reaction RNA(n) + a ribonucleoside 5'-triphosphate = RNA(n+1) + diphosphate. A non-essential component of RNA polymerase (RNAP). The protein is DNA-directed RNA polymerase subunit epsilon of Streptococcus thermophilus (strain CNRZ 1066).